Reading from the N-terminus, the 94-residue chain is Co-chaperonin GroES (94 aa).

It belongs to the GroES chaperonin family. As to quaternary structure, heptamer of 7 subunits arranged in a ring. Interacts with the chaperonin GroEL.

Its subcellular location is the cytoplasm. Functionally, together with the chaperonin GroEL, plays an essential role in assisting protein folding. The GroEL-GroES system forms a nano-cage that allows encapsulation of the non-native substrate proteins and provides a physical environment optimized to promote and accelerate protein folding. GroES binds to the apical surface of the GroEL ring, thereby capping the opening of the GroEL channel. This Clostridium perfringens (strain SM101 / Type A) protein is Co-chaperonin GroES.